Reading from the N-terminus, the 462-residue chain is UDP-N-acetylmuramoylalanine--D-glutamate ligase (462 aa).

ATP is bound at residue 117–123 (GTNGKTT).

It belongs to the MurCDEF family.

The protein resides in the cytoplasm. The enzyme catalyses UDP-N-acetyl-alpha-D-muramoyl-L-alanine + D-glutamate + ATP = UDP-N-acetyl-alpha-D-muramoyl-L-alanyl-D-glutamate + ADP + phosphate + H(+). It participates in cell wall biogenesis; peptidoglycan biosynthesis. Functionally, cell wall formation. Catalyzes the addition of glutamate to the nucleotide precursor UDP-N-acetylmuramoyl-L-alanine (UMA). This chain is UDP-N-acetylmuramoylalanine--D-glutamate ligase, found in Parasynechococcus marenigrum (strain WH8102).